A 92-amino-acid polypeptide reads, in one-letter code: MTKSELIERLCAEQTHLSAKEIEDAVKNILEHMASTLEAGERIEIRGFGSFSLHYREPRVGRNPKTGDKVELEGKYVPHFKPGKELRERVNL.

It belongs to the bacterial histone-like protein family. As to quaternary structure, heterodimer of an alpha and a beta chain.

In terms of biological role, this protein is one of the two subunits of integration host factor, a specific DNA-binding protein that functions in genetic recombination as well as in transcriptional and translational control. In Vibrio cholerae serotype O1 (strain ATCC 39541 / Classical Ogawa 395 / O395), this protein is Integration host factor subunit beta.